Here is a 317-residue protein sequence, read N- to C-terminus: tRNA dimethylallyltransferase (317 aa).

19-26 is a binding site for ATP; it reads GPTASGKS. 21-26 is a substrate binding site; it reads TASGKS. The segment at 44-47 is interaction with substrate tRNA; it reads DSMQ.

The protein belongs to the IPP transferase family. In terms of assembly, monomer. Requires Mg(2+) as cofactor.

It catalyses the reaction adenosine(37) in tRNA + dimethylallyl diphosphate = N(6)-dimethylallyladenosine(37) in tRNA + diphosphate. Catalyzes the transfer of a dimethylallyl group onto the adenine at position 37 in tRNAs that read codons beginning with uridine, leading to the formation of N6-(dimethylallyl)adenosine (i(6)A). This Methylorubrum extorquens (strain CM4 / NCIMB 13688) (Methylobacterium extorquens) protein is tRNA dimethylallyltransferase.